The primary structure comprises 580 residues: Protein O-linked-mannose beta-1,4-N-acetylglucosaminyltransferase 2 (580 aa).

Over 1–4 the chain is Cytoplasmic; it reads MHLS. The helical; Signal-anchor for type II membrane protein transmembrane segment at 5–25 threads the bilayer; sequence AVLNALLVSVLAAVLWKHVRL. Residues 26-580 are Lumenal-facing; that stretch reads REHAAALEEE…PFADVLVCNT (555 aa). N-linked (GlcNAc...) asparagine glycans are attached at residues Asn-99 and Asn-276. The 93-residue stretch at 488–580 folds into the Fibronectin type-III domain; the sequence is ARCQASVQGA…PFADVLVCNT (93 aa).

Belongs to the glycosyltransferase 61 family.

It localises to the endoplasmic reticulum membrane. It catalyses the reaction 3-O-(alpha-D-mannosyl)-L-threonyl-[protein] + UDP-N-acetyl-alpha-D-glucosamine = 3-O-(N-acetyl-beta-D-glucosaminyl-(1-&gt;4)-alpha-D-mannosyl)-L-threonyl-[protein] + UDP + H(+). Its pathway is protein modification; protein glycosylation. Its function is as follows. O-linked mannose beta-1,4-N-acetylglucosaminyltransferase that transfers UDP-N-acetyl-D-glucosamine to the 4-position of the mannose to generate N-acetyl-D-glucosamine-beta-1,4-O-D-mannosylprotein. Involved in the biosynthesis of the phosphorylated O-mannosyl trisaccharide (N-acetylgalactosamine-beta-3-N-acetylglucosamine-beta-4-(phosphate-6-)mannose), a carbohydrate structure present in alpha-dystroglycan (DAG1), which is required for binding laminin G-like domain-containing extracellular proteins with high affinity. In Canis lupus familiaris (Dog), this protein is Protein O-linked-mannose beta-1,4-N-acetylglucosaminyltransferase 2 (POMGNT2).